The chain runs to 844 residues: Saxiphilin (844 aa).

The N-terminal stretch at 1–19 is a signal peptide; that stretch reads MAPTFQTALFFTIISLSFA. One can recognise a Transferrin-like 1; first part domain in the interval 26-106; the sequence is VRWCAISDLE…IAEPYSSNRD (81 aa). Intrachain disulfides connect cysteine 29–cysteine 64, cysteine 39–cysteine 55, cysteine 110–cysteine 130, cysteine 141–cysteine 148, cysteine 150–cysteine 172, cysteine 180–cysteine 202, cysteine 222–cysteine 244, cysteine 277–cysteine 360, cysteine 322–cysteine 335, cysteine 332–cysteine 343, cysteine 388–cysteine 402, cysteine 495–cysteine 527, cysteine 505–cysteine 518, cysteine 552–cysteine 839, cysteine 570–cysteine 799, cysteine 607–cysteine 685, cysteine 641–cysteine 655, cysteine 652–cysteine 668, and cysteine 725–cysteine 739. 2 consecutive Thyroglobulin type-1 domains span residues 107–172 and 177–244; these read LQKC…RATC and LPKC…PATC. An absent in transferrins region spans residues 109–249; sequence KCLKERQQAL…IPATCQKHDL (141 aa). A Transferrin-like 1; second part domain is found at 245 to 482; that stretch reads QKHDLVTTCH…LFHAMKALTG (238 aa). One can recognise a Transferrin-like 2 domain in the interval 492-828; it reads VRWCTINKLE…YYTTVYGASR (337 aa).

Belongs to the transferrin family. As to quaternary structure, monomer. In terms of tissue distribution, plasma. Highest levels of transcripts found in the liver, the lung, the pancreas and the brain.

Its subcellular location is the secreted. Binds specifically to the neurotoxin saxitoxin. Its physiological role may be to transport or sequester an endogenous organic molecule other than Fe(3+). It may participate in a detoxification mechanism for neutralizing a microbial toxin. This chain is Saxiphilin, found in Aquarana catesbeiana (American bullfrog).